Here is a 157-residue protein sequence, read N- to C-terminus: MSKQPQQRYAEAIVNRKARHEFEIIETFVAGIQLAGSEVKSVRLGQASLNESFAIILRNEVWLENMQITPYKHNRMEVLEAKRSRKLLLHKKEIAKLQAKVSEKGLTLVPLKAFFTPHGLLKIELAIARGKKLYDKRETLKNRENQRHLDQLRKQYS.

Belongs to the SmpB family.

It is found in the cytoplasm. Functionally, required for rescue of stalled ribosomes mediated by trans-translation. Binds to transfer-messenger RNA (tmRNA), required for stable association of tmRNA with ribosomes. tmRNA and SmpB together mimic tRNA shape, replacing the anticodon stem-loop with SmpB. tmRNA is encoded by the ssrA gene; the 2 termini fold to resemble tRNA(Ala) and it encodes a 'tag peptide', a short internal open reading frame. During trans-translation Ala-aminoacylated tmRNA acts like a tRNA, entering the A-site of stalled ribosomes, displacing the stalled mRNA. The ribosome then switches to translate the ORF on the tmRNA; the nascent peptide is terminated with the 'tag peptide' encoded by the tmRNA and targeted for degradation. The ribosome is freed to recommence translation, which seems to be the essential function of trans-translation. This Chlorobium chlorochromatii (strain CaD3) protein is SsrA-binding protein.